The sequence spans 133 residues: Small ribosomal subunit protein uS8 (133 aa).

It belongs to the universal ribosomal protein uS8 family. As to quaternary structure, part of the 30S ribosomal subunit.

Functionally, one of the primary rRNA binding proteins, it binds directly to 16S rRNA central domain where it helps coordinate assembly of the platform of the 30S subunit. This Staphylothermus marinus (strain ATCC 43588 / DSM 3639 / JCM 9404 / F1) protein is Small ribosomal subunit protein uS8.